Here is a 369-residue protein sequence, read N- to C-terminus: Velvet complex subunit B (369 aa).

Disordered stretches follow at residues 1-54, 138-174, and 346-369; these read MYAV…STVH, SISTAMSSSYPPPPHPTSSDYPASYQTNPYGQPVGQP, and KDGVKGQGSRGRHSDEDDGLDNEY. Pro residues predominate over residues 13–27; the sequence is HPPPLSMDRIPPPST. The 293-residue stretch at 53 to 345 folds into the Velvet domain; it reads VHDGRIWSLQ…ANQGIKIPIR (293 aa).

The protein belongs to the velvet family. VelB subfamily. In terms of assembly, component of the heterotrimeric velvet complex composed of laeA, veA and velB; VeA acting as a bridging protein between laeA and velB. Interacts directly with veA. Forms a heterodimeric complex with vosA; the formation of the velB-vosA complex is light-dependent.

The protein localises to the nucleus. It is found in the cytoplasm. Component of the velvet transcription factor complex that controls sexual/asexual developmental ratio in response to light, promoting sexual development in the darkness while stimulating asexual sporulation under illumination. The velvet complex acts as a global regulator for secondary metabolite gene expression. Component of the velB-VosA heterodimeric complex that plays a dual role in activating genes associated with spore maturation and repressing certain development-associated genes. The velB-VosA complex binds DNA through the DNA-binding domain of vosA that recognizes an 11-nucleotide consensus sequence 5'-CTGGCCGCGGC-3' consisting of two motifs in the promoters of key developmental regulatory genes. The vosA-velB complex binds to the beta-glucan synthase fksA gene promoter in asexual spores for repression. This chain is Velvet complex subunit B, found in Emericella nidulans (strain FGSC A4 / ATCC 38163 / CBS 112.46 / NRRL 194 / M139) (Aspergillus nidulans).